A 492-amino-acid chain; its full sequence is N-succinylglutamate 5-semialdehyde dehydrogenase (492 aa).

An NAD(+)-binding site is contributed by G220–G225. Residues E243 and C277 contribute to the active site.

Belongs to the aldehyde dehydrogenase family. AstD subfamily.

It carries out the reaction N-succinyl-L-glutamate 5-semialdehyde + NAD(+) + H2O = N-succinyl-L-glutamate + NADH + 2 H(+). It participates in amino-acid degradation; L-arginine degradation via AST pathway; L-glutamate and succinate from L-arginine: step 4/5. Functionally, catalyzes the NAD-dependent reduction of succinylglutamate semialdehyde into succinylglutamate. The protein is N-succinylglutamate 5-semialdehyde dehydrogenase of Salmonella enteritidis PT4 (strain P125109).